Consider the following 521-residue polypeptide: Bifunctional purine biosynthesis protein PurH (521 aa).

The 150-residue stretch at 1-150 folds into the MGS-like domain; it reads MSEDRKAIKR…KNHPSVAVVT (150 aa).

This sequence belongs to the PurH family.

It carries out the reaction (6R)-10-formyltetrahydrofolate + 5-amino-1-(5-phospho-beta-D-ribosyl)imidazole-4-carboxamide = 5-formamido-1-(5-phospho-D-ribosyl)imidazole-4-carboxamide + (6S)-5,6,7,8-tetrahydrofolate. It catalyses the reaction IMP + H2O = 5-formamido-1-(5-phospho-D-ribosyl)imidazole-4-carboxamide. Its pathway is purine metabolism; IMP biosynthesis via de novo pathway; 5-formamido-1-(5-phospho-D-ribosyl)imidazole-4-carboxamide from 5-amino-1-(5-phospho-D-ribosyl)imidazole-4-carboxamide (10-formyl THF route): step 1/1. The protein operates within purine metabolism; IMP biosynthesis via de novo pathway; IMP from 5-formamido-1-(5-phospho-D-ribosyl)imidazole-4-carboxamide: step 1/1. This is Bifunctional purine biosynthesis protein PurH from Corynebacterium efficiens (strain DSM 44549 / YS-314 / AJ 12310 / JCM 11189 / NBRC 100395).